We begin with the raw amino-acid sequence, 251 residues long: Putative glutamine amidotransferase YLR126C (251 aa).

The region spanning 48–232 (EVFHVQKNVF…NRYERQCQEL (185 aa)) is the Glutamine amidotransferase type-1 domain. Active-site for GATase activity residues include Cys112, His198, and Glu200.

The protein localises to the cytoplasm. May have a role in copper and iron homeostasis. The sequence is that of Putative glutamine amidotransferase YLR126C from Saccharomyces cerevisiae (strain ATCC 204508 / S288c) (Baker's yeast).